Here is a 355-residue protein sequence, read N- to C-terminus: Type II restriction enzyme CfrBI (355 aa).

It carries out the reaction Endonucleolytic cleavage of DNA to give specific double-stranded fragments with terminal 5'-phosphates.. A P subtype restriction enzyme that recognizes the double-stranded sequence 5'-CCWWGG-3' and cleaves after C-1. The protein is Type II restriction enzyme CfrBI of Citrobacter freundii.